We begin with the raw amino-acid sequence, 248 residues long: Granzyme E (248 aa).

The first 18 residues, 1–18 (MPPVLILLTLLLPLGAGA), serve as a signal peptide directing secretion. Positions 19-20 (EE) are excised as a propeptide. Residues 21–246 (IIGGHVVKPH…FLPWISRNMK (226 aa)) form the Peptidase S1 domain. A disulfide bridge connects residues Cys50 and Cys66. The active-site Charge relay system is His65. Residues Asn68 and Asn102 are each glycosylated (N-linked (GlcNAc...) asparagine). The active-site Charge relay system is Asp109. 2 cysteine pairs are disulfide-bonded: Cys143-Cys210 and Cys175-Cys189. The N-linked (GlcNAc...) asparagine glycan is linked to Asn154. The Charge relay system role is filled by Ser204. Asn223 is a glycosylation site (N-linked (GlcNAc...) asparagine).

This sequence belongs to the peptidase S1 family. Granzyme subfamily.

The protein resides in the cytolytic granule. In terms of biological role, this enzyme is probably necessary for target cell lysis in cell-mediated immune responses. In Mus musculus (Mouse), this protein is Granzyme E (Gzme).